The following is a 127-amino-acid chain: MFRTMMKSKIHRATVTEANLKYVGSITIDEELLEVADILPNEKVQVVNNNNGARLETYVIPGKRGERTVCLNGAAARLVQVGDEVIIIAYGIFTDEAARTYEPKVIFVDEGNNPVKIAHEEIHGQQS.

Ser25 acts as the Schiff-base intermediate with substrate; via pyruvic acid in catalysis. Residue Ser25 is modified to Pyruvic acid (Ser). Thr57 contacts substrate. The Proton donor role is filled by Tyr58. 73-75 contacts substrate; it reads GAA.

The protein belongs to the PanD family. In terms of assembly, heterooctamer of four alpha and four beta subunits. Pyruvate serves as cofactor. Is synthesized initially as an inactive proenzyme, which is activated by self-cleavage at a specific serine bond to produce a beta-subunit with a hydroxyl group at its C-terminus and an alpha-subunit with a pyruvoyl group at its N-terminus.

The protein resides in the cytoplasm. The catalysed reaction is L-aspartate + H(+) = beta-alanine + CO2. Its pathway is cofactor biosynthesis; (R)-pantothenate biosynthesis; beta-alanine from L-aspartate: step 1/1. Catalyzes the pyruvoyl-dependent decarboxylation of aspartate to produce beta-alanine. This Desulfitobacterium hafniense (strain DSM 10664 / DCB-2) protein is Aspartate 1-decarboxylase.